A 337-amino-acid polypeptide reads, in one-letter code: Nodulation protein D 2 (337 aa).

The 58-residue stretch at 6–63 (LDLNLLVVLDSLMTARNLTAAARSINLSQPAMSAAVARLRAYFGDELFTMRGRTLVPT) folds into the HTH lysR-type domain. A DNA-binding region (H-T-H motif) is located at residues 23 to 42 (LTAAARSINLSQPAMSAAVA).

Belongs to the LysR transcriptional regulatory family.

In terms of biological role, nodD regulates the expression of the nodABCFE genes which encode other nodulation proteins. NodD is also a negative regulator of its own expression. Binds flavonoids as inducers. The chain is Nodulation protein D 2 (nodD2) from Bradyrhizobium sp. (strain NC92).